The following is a 305-amino-acid chain: Methionyl-tRNA formyltransferase (305 aa).

111–114 (SLLP) contributes to the (6S)-5,6,7,8-tetrahydrofolate binding site.

Belongs to the Fmt family.

It carries out the reaction L-methionyl-tRNA(fMet) + (6R)-10-formyltetrahydrofolate = N-formyl-L-methionyl-tRNA(fMet) + (6S)-5,6,7,8-tetrahydrofolate + H(+). Functionally, attaches a formyl group to the free amino group of methionyl-tRNA(fMet). The formyl group appears to play a dual role in the initiator identity of N-formylmethionyl-tRNA by promoting its recognition by IF2 and preventing the misappropriation of this tRNA by the elongation apparatus. This Campylobacter jejuni subsp. doylei (strain ATCC BAA-1458 / RM4099 / 269.97) protein is Methionyl-tRNA formyltransferase.